The sequence spans 319 residues: Beta-ketoacyl-[acyl-carrier-protein] synthase III (319 aa).

Catalysis depends on residues C112 and H246. The tract at residues 247 to 251 is ACP-binding; that stretch reads QANKR. N276 is an active-site residue.

It belongs to the thiolase-like superfamily. FabH family. Homodimer.

Its subcellular location is the cytoplasm. The enzyme catalyses malonyl-[ACP] + acetyl-CoA + H(+) = 3-oxobutanoyl-[ACP] + CO2 + CoA. The protein operates within lipid metabolism; fatty acid biosynthesis. In terms of biological role, catalyzes the condensation reaction of fatty acid synthesis by the addition to an acyl acceptor of two carbons from malonyl-ACP. Catalyzes the first condensation reaction which initiates fatty acid synthesis and may therefore play a role in governing the total rate of fatty acid production. Possesses both acetoacetyl-ACP synthase and acetyl transacylase activities. Its substrate specificity determines the biosynthesis of branched-chain and/or straight-chain of fatty acids. This Psychromonas ingrahamii (strain DSM 17664 / CCUG 51855 / 37) protein is Beta-ketoacyl-[acyl-carrier-protein] synthase III.